A 370-amino-acid polypeptide reads, in one-letter code: Glucan endo-1,3-beta-glucosidase (370 aa).

Residues 1–32 (MASFFARTRRFSLVSLFLLELFTINLIPTTDA) form the signal peptide. The residue at position 33 (Gln-33) is a Pyrrolidone carboxylic acid. Glu-127 acts as the Proton donor in catalysis. The active-site Nucleophile is Glu-272. The propeptide at 348–370 (GERRDGEIVEGDFNGTVSLKSDM) is removed in mature form. The N-linked (GlcNAc...) asparagine glycan is linked to Asn-361.

The protein belongs to the glycosyl hydrolase 17 family. Constitutively expressed in seedling roots.

It carries out the reaction Hydrolysis of (1-&gt;3)-beta-D-glucosidic linkages in (1-&gt;3)-beta-D-glucans.. Its function is as follows. Implicated in the defense of plants against pathogens. This Pisum sativum (Garden pea) protein is Glucan endo-1,3-beta-glucosidase.